The chain runs to 734 residues: Photosystem I P700 chlorophyll a apoprotein A2 (734 aa).

A run of 8 helical transmembrane segments spans residues 46–69, 135–158, 175–199, 273–291, 330–353, 369–395, 417–439, and 517–535; these read IFAS…FHVA, LYIG…LHLQ, LNHH…HVAL, IAHH…GHMY, LHFQ…QHMY, AALY…IFFI, AIIS…LYVH, and FLVH…LILV. [4Fe-4S] cluster-binding residues include Cys-559 and Cys-568. The next 2 membrane-spanning stretches (helical) occupy residues 575 to 596 and 643 to 665; these read AFYL…YWHW and LSVW…MFLI. The chlorophyll a site is built by His-654, Met-662, and Tyr-670. Trp-671 serves as a coordination point for phylloquinone. A helical membrane pass occupies residues 707–727; that stretch reads LVGLVHFSVGYIFTYAAFLIA.

The protein belongs to the PsaA/PsaB family. The PsaA/B heterodimer binds the P700 chlorophyll special pair and subsequent electron acceptors. PSI consists of a core antenna complex that captures photons, and an electron transfer chain that converts photonic excitation into a charge separation. The eukaryotic PSI reaction center is composed of at least 11 subunits. It depends on P700 is a chlorophyll a/chlorophyll a' dimer, A0 is one or more chlorophyll a, A1 is one or both phylloquinones and FX is a shared 4Fe-4S iron-sulfur center. as a cofactor.

It localises to the plastid. Its subcellular location is the chloroplast thylakoid membrane. It catalyses the reaction reduced [plastocyanin] + hnu + oxidized [2Fe-2S]-[ferredoxin] = oxidized [plastocyanin] + reduced [2Fe-2S]-[ferredoxin]. Functionally, psaA and PsaB bind P700, the primary electron donor of photosystem I (PSI), as well as the electron acceptors A0, A1 and FX. PSI is a plastocyanin-ferredoxin oxidoreductase, converting photonic excitation into a charge separation, which transfers an electron from the donor P700 chlorophyll pair to the spectroscopically characterized acceptors A0, A1, FX, FA and FB in turn. Oxidized P700 is reduced on the lumenal side of the thylakoid membrane by plastocyanin. In Gnetum parvifolium (Small-leaved jointfir), this protein is Photosystem I P700 chlorophyll a apoprotein A2.